Reading from the N-terminus, the 367-residue chain is ELAV-like protein 3 (367 aa).

RRM domains follow at residues 39–117 (TNLI…YARP), 125–205 (ANLY…FANN), and 284–362 (WCIF…FKTS).

It belongs to the RRM elav family. As to quaternary structure, interacts with MAP1B light chain LC1. Brain specific. Expressed in the hippocampus with expression in CA1, CA3 and dentate gyrus.

In terms of biological role, RNA-binding protein that binds to AU-rich element (ARE) sequences of target mRNAs, including VEGF mRNA. May also bind poly-A tracts via RRM 3. May be involved in neuronal differentiation and maintenance. Plays a role in the stabilization of GAP43 mRNA and in spatial learning. The sequence is that of ELAV-like protein 3 (Elavl3) from Mus musculus (Mouse).